Here is a 29-residue protein sequence, read N- to C-terminus: Cysteine-rich venom protein 25-A (29 aa).

The protein belongs to the CRISP family. Contains 8 disulfide bonds. As to expression, expressed by the venom gland.

It is found in the secreted. The sequence is that of Cysteine-rich venom protein 25-A from Naja haje haje (Egyptian cobra).